Here is a 95-residue protein sequence, read N- to C-terminus: Class II hydrophobin 3 (95 aa).

Residues 1–16 (MKLLAVAALLAGAAIA) form the signal peptide. 4 disulfides stabilise this stretch: cysteine 28-cysteine 77, cysteine 38-cysteine 68, cysteine 39-cysteine 51, and cysteine 78-cysteine 89.

The protein belongs to the cerato-ulmin hydrophobin family.

It localises to the secreted. The protein resides in the cell wall. Its function is as follows. Aerial growth, conidiation, and dispersal of filamentous fungi in the environment rely upon a capability of their secreting small amphipathic proteins called hydrophobins (HPBs) with low sequence identity. Class I can self-assemble into an outermost layer of rodlet bundles on aerial cell surfaces, conferring cellular hydrophobicity that supports fungal growth, development and dispersal; whereas Class II form highly ordered films at water-air interfaces through intermolecular interactions but contribute nothing to the rodlet structure. Hyd3 plays a neglectable role in hyphal growth and asexual development and does not seem involved in cellular hydrophobicity, conidial adhesion, stress tolerance nor insect pathogenicity. The chain is Class II hydrophobin 3 from Metarhizium robertsii (strain ARSEF 23 / ATCC MYA-3075) (Metarhizium anisopliae (strain ARSEF 23)).